The sequence spans 432 residues: Endosome-associated-trafficking regulator 1 (432 aa).

Serine 18 is subject to Phosphoserine. The span at aspartate 126–glycine 143 shows a compositional bias: basic and acidic residues. The interval aspartate 126–glutamate 145 is disordered. Serine 148 carries the post-translational modification Phosphoserine. Residues leucine 174–serine 196 form a required for interaction with PTPN13 region. The interval proline 226–phenylalanine 250 is disordered. Residues serine 241 and serine 245 each carry the phosphoserine modification. Coiled-coil stretches lie at residues leucine 262–phenylalanine 289 and phenylalanine 315–glycine 370.

This sequence belongs to the ENTR1 family. In terms of assembly, found in a complex with ENTR1, PTPN13 and GIT1. Interacts with PTPN13 (via the FERM domain). Interacts (via N-terminus) with GIT1 (via N- and C-terminus); this interaction is direct. Interacts with NOD2. Interacts (via N-terminus) with IFT88. Interacts with VPS35. Phosphorylated.

The protein localises to the cytoplasm. It is found in the early endosome. Its subcellular location is the endosome. The protein resides in the recycling endosome. It localises to the midbody. The protein localises to the cytoskeleton. It is found in the microtubule organizing center. Its subcellular location is the centrosome. The protein resides in the cilium basal body. In terms of biological role, may be involved in modulation of TNF response. May be involved in presentation of TNFRSF1A on the cell surface. Involved in the endosome-to-plasma membrane trafficking and recycling of SNX27-retromer-dependent cargo proteins, such as GLUT1. Involved in the regulation of cytokinesis; the function may involve PTPN13 and GIT1. Its function is as follows. Endosome-associated protein that plays a role in membrane receptor sorting, cytokinesis and ciliogenesis. Involved in the endosome-to-plasma membrane trafficking and recycling of SNX27-retromer-dependent cargo proteins, such as GLUT1. Involved in the regulation of cytokinesis; the function may involve PTPN13 and GIT1. Plays a role in the formation of cilia. Involved in cargo protein localization, such as PKD2, at primary cilia. Involved in the presentation of the tumor necrosis factor (TNF) receptor TNFRSF1A on the cell surface, and hence in the modulation of the TNF-induced apoptosis. The protein is Endosome-associated-trafficking regulator 1 of Mus musculus (Mouse).